The primary structure comprises 54 residues: ATP synthase F(0) complex subunit 8 (54 aa).

The helical transmembrane segment at 9–25 (WVFLFFLVWLVLGFLGL) threads the bilayer.

The protein belongs to the ATPase protein 8 family. In terms of assembly, component of the ATP synthase complex composed at least of ATP5F1A/subunit alpha, ATP5F1B/subunit beta, ATP5MC1/subunit c (homooctomer), MT-ATP6/subunit a, MT-ATP8/subunit 8, ATP5ME/subunit e, ATP5MF/subunit f, ATP5MG/subunit g, ATP5MK/subunit k, ATP5MJ/subunit j, ATP5F1C/subunit gamma, ATP5F1D/subunit delta, ATP5F1E/subunit epsilon, ATP5PF/subunit F6, ATP5PB/subunit b, ATP5PD/subunit d, ATP5PO/subunit OSCP. ATP synthase complex consists of a soluble F(1) head domain (subunits alpha(3) and beta(3)) - the catalytic core - and a membrane F(0) domain - the membrane proton channel (subunits c, a, 8, e, f, g, k and j). These two domains are linked by a central stalk (subunits gamma, delta, and epsilon) rotating inside the F1 region and a stationary peripheral stalk (subunits F6, b, d, and OSCP).

The protein resides in the mitochondrion membrane. Functionally, subunit 8, of the mitochondrial membrane ATP synthase complex (F(1)F(0) ATP synthase or Complex V) that produces ATP from ADP in the presence of a proton gradient across the membrane which is generated by electron transport complexes of the respiratory chain. ATP synthase complex consist of a soluble F(1) head domain - the catalytic core - and a membrane F(1) domain - the membrane proton channel. These two domains are linked by a central stalk rotating inside the F(1) region and a stationary peripheral stalk. During catalysis, ATP synthesis in the catalytic domain of F(1) is coupled via a rotary mechanism of the central stalk subunits to proton translocation. In vivo, can only synthesize ATP although its ATP hydrolase activity can be activated artificially in vitro. Part of the complex F(0) domain. The chain is ATP synthase F(0) complex subunit 8 from Branchiostoma lanceolatum (Common lancelet).